Consider the following 484-residue polypeptide: uncharacterized protein (484 aa).

12 helical membrane-spanning segments follow: residues 19–39 (LSFG…MIFV), 78–98 (VNWG…WLIV), 111–131 (FFML…FIIL), 134–154 (IFAI…SNYL), 165–185 (FSPF…AGII), 199–219 (IVFL…IILG), 249–269 (TWYW…PFTF), 289–309 (ISVF…TIGL), 321–341 (ISTI…VFVL), 360–380 (LFLF…GVML), 398–418 (FGLI…ITSL), and 440–460 (LGAY…LALL).

Its subcellular location is the cell membrane. This is an uncharacterized protein from Mesomycoplasma hyopneumoniae (strain 232) (Mycoplasma hyopneumoniae).